The following is a 238-amino-acid chain: Large ribosomal subunit protein uL2 (238 aa).

The interval 200-238 (HGGGLHQSVSRPSTVSRNAPPGRKVGHIAARRTGRKEGK) is disordered. Over residues 206–216 (QSVSRPSTVSR) the composition is skewed to polar residues. A compositionally biased stretch (basic residues) spans 223-238 (KVGHIAARRTGRKEGK).

Belongs to the universal ribosomal protein uL2 family. As to quaternary structure, part of the 50S ribosomal subunit. Forms a bridge to the 30S subunit in the 70S ribosome.

Its function is as follows. One of the primary rRNA binding proteins. Required for association of the 30S and 50S subunits to form the 70S ribosome, for tRNA binding and peptide bond formation. It has been suggested to have peptidyltransferase activity; this is somewhat controversial. Makes several contacts with the 16S rRNA in the 70S ribosome. The chain is Large ribosomal subunit protein uL2 from Saccharolobus islandicus (strain Y.N.15.51 / Yellowstone #2) (Sulfolobus islandicus).